A 315-amino-acid polypeptide reads, in one-letter code: GTP cyclohydrolase MptA (315 aa).

The protein belongs to the GTP cyclohydrolase IV family. As to quaternary structure, homodimer. Fe(2+) is required as a cofactor.

It catalyses the reaction GTP + H2O = 7,8-dihydroneopterin 2',3'-cyclic phosphate + formate + diphosphate + H(+). It participates in cofactor biosynthesis; 5,6,7,8-tetrahydromethanopterin biosynthesis. In terms of biological role, converts GTP to 7,8-dihydro-D-neopterin 2',3'-cyclic phosphate, the first intermediate in the biosynthesis of coenzyme methanopterin. The chain is GTP cyclohydrolase MptA from Methanococcus maripaludis (strain DSM 14266 / JCM 13030 / NBRC 101832 / S2 / LL).